The chain runs to 146 residues: Hemoglobin subunit beta (146 aa).

Valine 1 bears the N-acetylvaline mark. The Globin domain occupies 2-146; sequence HLTPEEKALV…VANALAHKYH (145 aa). Lysine 59 is subject to N6-acetyllysine. Histidine 63 contacts heme b. Lysine 82 is modified (N6-acetyllysine). Histidine 92 is a binding site for heme b. An S-nitrosocysteine modification is found at cysteine 93. An N6-acetyllysine modification is found at lysine 144.

It belongs to the globin family. Heterotetramer of two alpha chains and two beta chains. As to expression, red blood cells.

In terms of biological role, involved in oxygen transport from the lung to the various peripheral tissues. The polypeptide is Hemoglobin subunit beta (HBB) (Trichechus inunguis (Amazon manatee)).